The sequence spans 354 residues: Glycerol-3-phosphate dehydrogenase [NAD(+)], glycosomal (354 aa).

NAD(+) contacts are provided by residues 15–20, phenylalanine 90, lysine 118, and alanine 150; that span reads GSGAFG. Residue lysine 118 participates in substrate binding. The active-site Proton acceptor is the lysine 203. The NAD(+) site is built by arginine 267 and glutamate 293. Substrate is bound at residue 267–268; that stretch reads RN. The Microbody targeting signal motif lies at 352–354; that stretch reads SKM.

This sequence belongs to the NAD-dependent glycerol-3-phosphate dehydrogenase family.

It localises to the glycosome. The catalysed reaction is sn-glycerol 3-phosphate + NAD(+) = dihydroxyacetone phosphate + NADH + H(+). In Trypanosoma brucei rhodesiense, this protein is Glycerol-3-phosphate dehydrogenase [NAD(+)], glycosomal (GPD).